Reading from the N-terminus, the 198-residue chain is tRNA (cytidine(56)-2'-O)-methyltransferase (198 aa).

S-adenosyl-L-methionine is bound by residues leucine 81, 110 to 114 (GAEKV), and 128 to 135 (IGNQPHSE). The disordered stretch occupies residues 178 to 198 (DAKQAEASGEGASRKNGQLPS).

It belongs to the aTrm56 family. Homodimer.

The protein resides in the cytoplasm. It carries out the reaction cytidine(56) in tRNA + S-adenosyl-L-methionine = 2'-O-methylcytidine(56) in tRNA + S-adenosyl-L-homocysteine + H(+). Specifically catalyzes the AdoMet-dependent 2'-O-ribose methylation of cytidine at position 56 in tRNAs. This chain is tRNA (cytidine(56)-2'-O)-methyltransferase, found in Pyrococcus abyssi (strain GE5 / Orsay).